The following is a 603-amino-acid chain: DNA mismatch repair protein MutL (603 aa).

It belongs to the DNA mismatch repair MutL/HexB family.

Functionally, this protein is involved in the repair of mismatches in DNA. It is required for dam-dependent methyl-directed DNA mismatch repair. May act as a 'molecular matchmaker', a protein that promotes the formation of a stable complex between two or more DNA-binding proteins in an ATP-dependent manner without itself being part of a final effector complex. This is DNA mismatch repair protein MutL from Sphingopyxis alaskensis (strain DSM 13593 / LMG 18877 / RB2256) (Sphingomonas alaskensis).